The primary structure comprises 38 residues: Photosystem II reaction center protein L (38 aa).

A helical transmembrane segment spans residues Ser-17–Phe-37.

Belongs to the PsbL family. In terms of assembly, PSII is composed of 1 copy each of membrane proteins PsbA, PsbB, PsbC, PsbD, PsbE, PsbF, PsbH, PsbI, PsbJ, PsbK, PsbL, PsbM, PsbT, PsbX, PsbY, PsbZ, Psb30/Ycf12, at least 3 peripheral proteins of the oxygen-evolving complex and a large number of cofactors. It forms dimeric complexes.

Its subcellular location is the plastid. It localises to the chloroplast thylakoid membrane. Its function is as follows. One of the components of the core complex of photosystem II (PSII). PSII is a light-driven water:plastoquinone oxidoreductase that uses light energy to abstract electrons from H(2)O, generating O(2) and a proton gradient subsequently used for ATP formation. It consists of a core antenna complex that captures photons, and an electron transfer chain that converts photonic excitation into a charge separation. This subunit is found at the monomer-monomer interface and is required for correct PSII assembly and/or dimerization. This chain is Photosystem II reaction center protein L, found in Mesostigma viride (Green alga).